An 818-amino-acid polypeptide reads, in one-letter code: H(+)/Cl(-) exchange transporter 3 (818 aa).

Residues 1–125 (MESEQLFHRG…WEMTKSLYDA (125 aa)) are Cytoplasmic-facing. 3 consecutive short sequence motifs (di-leucine internalization motif; mediates targeting to late endosome and lysosome membranes) follow at residues 28 to 29 (LL), 46 to 47 (LL), and 71 to 75 (LLDLL). Residues 126 to 163 (WSGWLVVTLTGLASGALAGLIDIAADWMTDLKEGICLS) form a helical membrane-spanning segment. N-linked (GlcNAc...) asparagine glycosylation occurs at Asn177. Residues 209–232 (MNYIMYIFWALSFAFLAVSLVKVF) traverse the membrane as a helical segment. The short motif at 238-242 (GSGIP) is the Selectivity filter part_1 element. Position 239 (Ser239) interacts with chloride. Residues 241 to 248 (IPEIKTIL) constitute an intramembrane region (helical). The next 2 helical transmembrane spans lie at 258-276 (GKWTLMIKTITLVLAVASG) and 282-301 (EGPLVHVACCCGNIFSYLFP). The short motif at 280–284 (GKEGP) is the Selectivity filter part_2 element. 2 intramembrane regions (helical) span residues 313 to 325 (VLSAASAAGVSVA) and 329 to 337 (PIGGVLFSL). 3 consecutive transmembrane segments (helical) span residues 349-367 (LWRSFFAALVAAFVLRSIN), 391-416 (FPFILLGVFGGLWGAFFIRANIAWCR), and 423-443 (FGKYPVLEVIIVAAITAVIAF). Asn451 and Asn479 each carry an N-linked (GlcNAc...) asparagine glycan. Transmembrane regions (helical) follow at residues 500-520 (IWQLCLALIFKIIMTVFTFGI) and 525-544 (GLFIPSMAIGAIAGRIVGIA). A Selectivity filter part_3 motif is present at residues 525–529 (GLFIP). Residue Phe527 coordinates chloride. 2 consecutive intramembrane regions (helical) follow at residues 572–586 (GLYAMVGAAACLGGV) and 590–601 (TVSLVVIVFELT). The segment at residues 602 to 605 (GGLE) is an intramembrane region (note=Loop between two helices). A helical transmembrane segment spans residues 606–624 (YIVPLMAAVMTSKWVGDAF). The Cytoplasmic segment spans residues 625–818 (GREGIYEAHI…NQDPASIMFN (194 aa)). Tyr630 contributes to the chloride binding site. 2 CBS domains span residues 658 to 722 (MRPR…ARKK) and 755 to 812 (LDMS…NQDP). ATP contacts are provided by residues 689 to 691 (YNG) and 796 to 799 (TKKD).

It belongs to the chloride channel (TC 2.A.49) family. ClC-3/CLCN3 subfamily. As to quaternary structure, monomer and homodimer. Forms heterodimers with CLCN4. In terms of processing, N-glycosylated. As to expression, abundant in brain, especially in the olfactory bulb, hippocampus, and cerebellum. A moderate expression is seen in the lung, kidney and adrenal gland.

The protein localises to the lysosome membrane. The protein resides in the late endosome membrane. It localises to the cell membrane. Its subcellular location is the early endosome membrane. Strongly outwardly rectifying, electrogenic H(+)/Cl(-)exchanger which mediates the exchange of chloride ions against protons. The CLC channel family contains both chloride channels and proton-coupled anion transporters that exchange chloride or another anion for protons. The presence of conserved gating glutamate residues is typical for family members that function as antiporters. Functionally, strongly outwardly rectifying, electrogenic H(+)/Cl(-)exchanger which mediates the exchange of chloride ions against protons. May play an important role in neuronal cell function through regulation of membrane excitability by protein kinase C. It could help neuronal cells to establish short-term memory. This is H(+)/Cl(-) exchange transporter 3 (Clcn3) from Rattus norvegicus (Rat).